Reading from the N-terminus, the 446-residue chain is Phosphoglucosamine mutase (446 aa).

Residue S101 is the Phosphoserine intermediate of the active site. Mg(2+) is bound by residues S101, D240, D242, and D244. S101 is modified (phosphoserine).

This sequence belongs to the phosphohexose mutase family. The cofactor is Mg(2+). In terms of processing, activated by phosphorylation.

It carries out the reaction alpha-D-glucosamine 1-phosphate = D-glucosamine 6-phosphate. Functionally, catalyzes the conversion of glucosamine-6-phosphate to glucosamine-1-phosphate. The chain is Phosphoglucosamine mutase from Coxiella burnetii (strain RSA 331 / Henzerling II).